We begin with the raw amino-acid sequence, 107 residues long: Putative ATP synthase subunit f, mitochondrial (107 aa).

The protein belongs to the ATPase F chain family. F-type ATPases have 2 components, CF(1) - the catalytic core - and CF(0) - the membrane proton channel. CF(0) seems to have nine subunits: a, b, c, d, e, f, g, F6 and 8 (or A6L).

The protein resides in the mitochondrion membrane. Functionally, mitochondrial membrane ATP synthase (F(1)F(0) ATP synthase or Complex V) produces ATP from ADP in the presence of a proton gradient across the membrane which is generated by electron transport complexes of the respiratory chain. F-type ATPases consist of two structural domains, F(1) - containing the extramembraneous catalytic core and F(0) - containing the membrane proton channel, linked together by a central stalk and a peripheral stalk. During catalysis, ATP synthesis in the catalytic domain of F(1) is coupled via a rotary mechanism of the central stalk subunits to proton translocation. Part of the complex F(0) domain. Minor subunit located with subunit a in the membrane. The polypeptide is Putative ATP synthase subunit f, mitochondrial (Drosophila melanogaster (Fruit fly)).